An 82-amino-acid chain; its full sequence is Small ribosomal subunit protein bS16 (82 aa).

The protein belongs to the bacterial ribosomal protein bS16 family.

The chain is Small ribosomal subunit protein bS16 from Bdellovibrio bacteriovorus (strain ATCC 15356 / DSM 50701 / NCIMB 9529 / HD100).